A 335-amino-acid polypeptide reads, in one-letter code: tRNA N6-adenosine threonylcarbamoyltransferase (335 aa).

Fe cation is bound by residues His-111 and His-115. Residues 133-137 (LISGG), Asp-166, Gly-179, and Asn-276 each bind substrate. Position 301 (Asp-301) interacts with Fe cation.

It belongs to the KAE1 / TsaD family. The cofactor is Fe(2+).

The protein localises to the cytoplasm. It catalyses the reaction L-threonylcarbamoyladenylate + adenosine(37) in tRNA = N(6)-L-threonylcarbamoyladenosine(37) in tRNA + AMP + H(+). Functionally, required for the formation of a threonylcarbamoyl group on adenosine at position 37 (t(6)A37) in tRNAs that read codons beginning with adenine. Is involved in the transfer of the threonylcarbamoyl moiety of threonylcarbamoyl-AMP (TC-AMP) to the N6 group of A37, together with TsaE and TsaB. TsaD likely plays a direct catalytic role in this reaction. This chain is tRNA N6-adenosine threonylcarbamoyltransferase, found in Wolbachia sp. subsp. Drosophila simulans (strain wRi).